The following is a 138-amino-acid chain: Large ribosomal subunit protein uL16 (138 aa).

Basic residues predominate over residues 1 to 14; the sequence is MLQPKRTKYRRTHR. A disordered region spans residues 1 to 24; sequence MLQPKRTKYRRTHRLQHDKGEAHT. Basic and acidic residues predominate over residues 15–24; sequence LQHDKGEAHT.

Belongs to the universal ribosomal protein uL16 family. As to quaternary structure, part of the 50S ribosomal subunit.

Binds 23S rRNA and is also seen to make contacts with the A and possibly P site tRNAs. This chain is Large ribosomal subunit protein uL16, found in Mycoplasma mobile (strain ATCC 43663 / 163K / NCTC 11711) (Mesomycoplasma mobile).